The primary structure comprises 186 residues: Ribosome-recycling factor (186 aa).

Belongs to the RRF family.

Its subcellular location is the cytoplasm. Its function is as follows. Responsible for the release of ribosomes from messenger RNA at the termination of protein biosynthesis. May increase the efficiency of translation by recycling ribosomes from one round of translation to another. This is Ribosome-recycling factor from Prosthecochloris aestuarii (strain DSM 271 / SK 413).